We begin with the raw amino-acid sequence, 643 residues long: Beta-1,3-galactosyltransferase GALT1 (643 aa).

Residues 1 to 6 (MKRFYG) are Cytoplasmic-facing. A helical; Signal-anchor for type II membrane protein membrane pass occupies residues 7-23 (GLLVVSMCMFLTVYRYV). At 24-643 (DLNTPVEKPY…TKRSLCCREW (620 aa)) the chain is on the lumenal side. Residues Asn-45, Asn-87, Asn-144, Asn-162, Asn-277, Asn-287, and Asn-508 are each glycosylated (N-linked (GlcNAc...) asparagine). Positions 171-364 (LKLQIPCGLT…DFRLISILAS (194 aa)) constitute a Galectin domain.

The protein belongs to the glycosyltransferase 31 family. In terms of assembly, interacts with GMII. Mn(2+) serves as cofactor. In terms of tissue distribution, expressed in stems and siliques.

Its subcellular location is the golgi apparatus membrane. It participates in protein modification; protein glycosylation. Beta-1,3-galactosyltransferase that transfers galactose from UDP-galactose to substrates with a terminal beta-N-acetylglucosamine (beta-GlcNAc) residue. Involved in the biosynthesis of N-glycans containing Lewis a structures (with the combination of FUT13). The chain is Beta-1,3-galactosyltransferase GALT1 from Arabidopsis thaliana (Mouse-ear cress).